Consider the following 549-residue polypeptide: Cytoplasmic trehalase (549 aa).

Substrate-binding positions include Arg-168, 175–176 (WD), Asn-212, 221–223 (RSQ), 292–294 (RDE), and Gly-324. Active-site proton donor/acceptor residues include Asp-326 and Glu-509. Substrate is bound at residue Glu-525.

Belongs to the glycosyl hydrolase 37 family. In terms of assembly, monomer.

It is found in the cytoplasm. The enzyme catalyses alpha,alpha-trehalose + H2O = alpha-D-glucose + beta-D-glucose. It functions in the pathway glycan degradation; trehalose degradation; D-glucose from alpha,alpha-trehalose: step 1/1. Hydrolyzes trehalose to glucose. Could be involved, in cells returning to low osmolarity conditions, in the utilization of the accumulated cytoplasmic trehalose, which was synthesized in response to high osmolarity. This chain is Cytoplasmic trehalase, found in Escherichia fergusonii (strain ATCC 35469 / DSM 13698 / CCUG 18766 / IAM 14443 / JCM 21226 / LMG 7866 / NBRC 102419 / NCTC 12128 / CDC 0568-73).